A 59-amino-acid chain; its full sequence is Lantibiotic lacticin 3147 A1 (59 aa).

Residues 1-29 constitute a propeptide that is removed on maturation; that stretch reads MNKNEIETQPVTWLEEVSDQNFDEDVFGA. Positions 30 to 31 form a cross-link, lanthionine (Cys-Ser); sequence CS. A 2,3-didehydrobutyrine mark is found at threonine 32 and threonine 34. A 2,3-didehydroalanine (Ser) modification is found at serine 36. A cross-link (lanthionine (Ser-Cys)) is located at residues 38–48; sequence SDYWGNNGAWC. 2 consecutive cross-links (beta-methyllanthionine (Thr-Cys)) follow at residues 49 to 54 and 51 to 58; these read TLTHEC and THECMAWC.

In terms of processing, maturation of lantibiotics involves the enzymatic conversion of Thr, and Ser into dehydrated AA and the formation of thioether bonds with cysteine. This is followed by membrane translocation and cleavage of the modified precursor. Post-translationally, it is not established whether the 2,3-didehydrobutyrines are the E- or Z-isomers. In the NMR model they were assumed to be the Z-isomer.

It localises to the secreted. Lanthionine-containing peptide antibiotic (lantibiotic) active on Gram-positive bacteria. The bactericidal activity of lantibiotics is based on depolarization of energized bacterial cytoplasmic membranes, initiated by the formation of aqueous transmembrane pores. When present individually lacticin 3147 A1 exhibits strong activity towards L.lactis strain AM2, weak activity towards L.lactis strain HP and no activity towards L.lactis strain IFPL359, but when combined with lacticin 3147 A2 it displays strong activity towards all three strains. In Lactococcus lactis subsp. lactis (Streptococcus lactis), this protein is Lantibiotic lacticin 3147 A1.